A 984-amino-acid polypeptide reads, in one-letter code: MDDRYPALQRAQLRLDFIHANSTTHSFLFGALAELLDNARDAGAERLDVFSVDNEKLQGGFMLCFLDDGCGMSPEEASDIIYFGRSKKRLSTLKFIGQYGNGLKSGSMRIGKDFILFTKKEETMTCVFFSQTFCEEESLSEVVVPMPSWLIRTRESVTDDPQKFAMELSIIYKYSPFKTEAELMQQFDVIYGKCGTLLVIYNLKLLLNGEPELDVKTDKEDILMAGALEDFPARWSFRAYTSVLYFNPWMRIFIQAKRVKTKHLCYCLYRPRKYLYVTSSFKGAFKDEVKKAEEAVKIAESILKEAQIKVNQCDRTSLSSAKDVLQRALEDVEAKQKNLKEKQRELKTARTLSLFYGVNVENRSQAGMFIYSNNRLIKMHEKVGSQLKLKSLLGAGVVGIVNIPLEVMEPSHNKQEFLNVQEYNHLLKVMGQYLVQYCKDTGINNRNLTLFCNEFGYQNDIDVEKPLNSFQYQRRQAMGIPFIIQCDLCLKWRVLPSSTNYQEKEFFDIWICANNPNRLENSCHQVECLPSIPLGTMSTISPSKNEKEKQLRESVIKYQNRLAEQQPQPQFIPVDEITVTSTCLTSAHKENTKTQKIRLLGDDLKHESLSSFELSASRRGQKRNIEETDSDVEYISETKIMKKSMEEKMNSQQQRIPVALPENVKLAERSQRSQIANITTVWRAQPTEGCLKNAQAASWEMKRKQSLNFVEECKVLTEDENTSDSDIILVSDKSNTDVSLKQEKKEIPLLNQEKQELCNDVLAMKRSSSLPSWKSLLNVPMEDVNLSSGHIARVSVSGSCKVASSPASSQSTPVKETVRKLKSKLREILLYFFPEHQLPSELEEPALSCELEQCPEQMNKKLKMCFNQIQNTYMVQYEKKIKRKLQSIIYDSNTRGIHNEISLGQCENKRKISEDKLKNLRIKLALLLQKLQLGGPEGDLEQTDTYLEALLKEDNLLFQNNLNKVTIDARHRLPLEKNEKTSEN.

The stretch at 284–353 (AFKDEVKKAE…RELKTARTLS (70 aa)) forms a coiled coil. The CW-type zinc finger occupies 477 to 531 (AMGIPFIIQCDLCLKWRVLPSSTNYQEKEFFDIWICANNPNRLENSCHQVECLPS). Cys486, Cys489, Cys512, and Cys523 together coordinate Zn(2+). Coiled-coil stretches lie at residues 737–761 (DVSL…CNDV) and 900–934 (EISL…LQLG).

It localises to the nucleus. Its function is as follows. Required for spermatogenesis. Essential for de novo DNA methylation and silencing of transposable elements in the male embryonic germ cells. This Homo sapiens (Human) protein is MORC family CW-type zinc finger protein 1.